Consider the following 112-residue polypeptide: Nitrogen regulatory protein GlnK (112 aa).

Threonine 29 contributes to the ADP binding site. ATP is bound at residue glycine 37. 38-39 serves as a coordination point for ADP; that stretch reads RQ. Tyrosine 51 bears the O-UMP-tyrosine mark. ADP-binding positions include alanine 64, 87–90, and 101–103; these read GDGK and RIR. ATP contacts are provided by residues alanine 64, 87–90, and 101–103; these read GDGK and RIR.

This sequence belongs to the P(II) protein family. In terms of assembly, homotrimer. In response to elevation of the extracellular ammonium concentration, interacts and forms a complex with AmtB. Uridylylated/deuridylylated by GlnD. Fully uridylylated in nitrogen-limited conditions and deuridylylated when extracellular ammonium increases.

It is found in the cytoplasm. Its subcellular location is the cell inner membrane. With respect to regulation, formation of the GlnK-AmtB complex is influenced by intracellular pools of the effector molecules ATP, ADP, Mg(2+) and 2-oxoglutarate. The GlnK-AmtB interaction is also controlled by the level of intracellular glutamine and the uridylylation status of GlnK. In terms of biological role, involved in the regulation of nitrogen metabolism. Regulates the activity of its targets by protein-protein interaction in response to the nitrogen status of the cell. Involved in the regulation of the ammonium transporter AmtB so as to optimize ammonium uptake under all growth conditions. In nitrogen-limited conditions, GlnK does not interact with AmtB, which remains active and imports ammonium. When extracellular ammonium increases, GlnK associates tightly with AmtB in the inner membrane, thereby inhibiting the transporter activity. This is Nitrogen regulatory protein GlnK (glnK) from Escherichia coli O157:H7.